The following is a 581-amino-acid chain: 2-hydroxyacyl-CoA lyase 1 (581 aa).

2 positions are modified to phosphoserine: Ser-4 and Ser-6. Glu-63 lines the thiamine diphosphate pocket. 3 positions are modified to N6-succinyllysine: Lys-354, Lys-361, and Lys-368. The segment at 404-487 (TMDIGRTMLQ…IILLVVNNNG (84 aa)) is thiamine pyrophosphate binding. Asp-458 and Asn-485 together coordinate Mg(2+). Positions 579-581 (SNM) match the Microbody targeting signal motif.

This sequence belongs to the TPP enzyme family. In terms of assembly, homotetramer. The cofactor is Mg(2+). Requires thiamine diphosphate as cofactor. Predominanly expressed in liver.

Its subcellular location is the peroxisome. The catalysed reaction is a 2-hydroxy-3-methyl fatty acyl-CoA = a 2-methyl-branched fatty aldehyde + formyl-CoA. It carries out the reaction an (R)-2-hydroxy-long-chain-fatty acyl-CoA = a long-chain fatty aldehyde + formyl-CoA. The enzyme catalyses 2-hydroxy-3-methylhexadecanoyl-CoA = 2-methylpentadecanal + formyl-CoA. It catalyses the reaction 2-hydroxyoctadecanoyl-CoA = heptadecanal + formyl-CoA. The catalysed reaction is 2-hydroxyphytanoyl-CoA = 2,6,10,14-tetramethylpentadecanal + formyl-CoA. It functions in the pathway lipid metabolism; fatty acid metabolism. In terms of biological role, peroxisomal 2-OH acyl-CoA lyase involved in the cleavage (C1 removal) reaction in the fatty acid alpha-oxydation in a thiamine pyrophosphate (TPP)-dependent manner. Involved in the degradation of 3-methyl-branched fatty acids like phytanic acid and the shortening of 2-hydroxy long-chain fatty acids. Plays a significant role in the biosynthesis of heptadecanal in the liver. This Mus musculus (Mouse) protein is 2-hydroxyacyl-CoA lyase 1 (Hacl1).